The sequence spans 760 residues: BMP/retinoic acid-inducible neural-specific protein 1 (760 aa).

Positions 1–16 (MNWRFVELLYFLFVWG) are cleaved as a signal peptide. One can recognise an MACPF domain in the interval 68-251 (RYKIYREFAR…FVQSALSYIM (184 aa)). N-linked (GlcNAc...) asparagine glycans are attached at residues Asn-156, Asn-433, Asn-443, Asn-553, Asn-599, Asn-630, and Asn-676.

Belongs to the BRINP family. In terms of tissue distribution, expressed in brain. Expressed in GABAergic neurons of the pre-frontal cortex. Weakly expressed in embryonic stem (ES) cells and in ES-derived neural stem cells (NSCs).

It localises to the cytoplasm. In terms of biological role, plays a role in neurogenesis, brain development, and the functioning of GABAergic neurons. May suppress cell cycle progression in postmitotic neurons by inhibiting G1/S transition. The sequence is that of BMP/retinoic acid-inducible neural-specific protein 1 (Brinp1) from Mus musculus (Mouse).